The following is a 611-amino-acid chain: UvrABC system protein C (611 aa).

Residues 6 to 84 form the GIY-YIG domain; sequence NNPGVYRMFN…IKRSRPRFNV (79 aa). The UVR domain occupies 194 to 229; the sequence is QSVKDHLAAAMQAASADLDFEHAAVYRDRLAALSHV.

The protein belongs to the UvrC family. In terms of assembly, interacts with UvrB in an incision complex.

The protein resides in the cytoplasm. In terms of biological role, the UvrABC repair system catalyzes the recognition and processing of DNA lesions. UvrC both incises the 5' and 3' sides of the lesion. The N-terminal half is responsible for the 3' incision and the C-terminal half is responsible for the 5' incision. The sequence is that of UvrABC system protein C from Brucella suis biovar 1 (strain 1330).